A 329-amino-acid chain; its full sequence is Phenylalanine--tRNA ligase alpha subunit (329 aa).

Mg(2+) is bound at residue Glu254.

Belongs to the class-II aminoacyl-tRNA synthetase family. Phe-tRNA synthetase alpha subunit type 1 subfamily. In terms of assembly, tetramer of two alpha and two beta subunits. Requires Mg(2+) as cofactor.

Its subcellular location is the cytoplasm. It catalyses the reaction tRNA(Phe) + L-phenylalanine + ATP = L-phenylalanyl-tRNA(Phe) + AMP + diphosphate + H(+). The protein is Phenylalanine--tRNA ligase alpha subunit of Haemophilus influenzae (strain PittEE).